Reading from the N-terminus, the 227-residue chain is 3,4-dihydroxy-2-butanone 4-phosphate synthase (227 aa).

D-ribulose 5-phosphate is bound by residues 45–46 (RE), aspartate 50, 158–162 (RRGHT), and glutamate 182. Glutamate 46 contacts Mg(2+). Residue histidine 161 coordinates Mg(2+).

The protein belongs to the DHBP synthase family. Homodimer. Mg(2+) serves as cofactor. Mn(2+) is required as a cofactor.

The catalysed reaction is D-ribulose 5-phosphate = (2S)-2-hydroxy-3-oxobutyl phosphate + formate + H(+). It functions in the pathway cofactor biosynthesis; riboflavin biosynthesis; 2-hydroxy-3-oxobutyl phosphate from D-ribulose 5-phosphate: step 1/1. Its function is as follows. Catalyzes the conversion of D-ribulose 5-phosphate to formate and 3,4-dihydroxy-2-butanone 4-phosphate. The chain is 3,4-dihydroxy-2-butanone 4-phosphate synthase from Ralstonia nicotianae (strain ATCC BAA-1114 / GMI1000) (Ralstonia solanacearum).